A 141-amino-acid polypeptide reads, in one-letter code: HTH-type transcriptional repressor NsrR (141 aa).

One can recognise an HTH rrf2-type domain in the interval 2–129 (QLTNFTDFGL…DQHTIQDMLT (128 aa)). The H-T-H motif DNA-binding region spans 28–51 (ITVVTETFDVSRNHMVKIINKLGQ). Residues Cys91, Cys96, and Cys102 each contribute to the [2Fe-2S] cluster site.

[2Fe-2S] cluster is required as a cofactor.

Functionally, nitric oxide-sensitive repressor of genes involved in protecting the cell against nitrosative stress. May require iron for activity. The sequence is that of HTH-type transcriptional repressor NsrR from Aliivibrio salmonicida (strain LFI1238) (Vibrio salmonicida (strain LFI1238)).